A 983-amino-acid polypeptide reads, in one-letter code: Protein translocase subunit SecA (983 aa).

ATP contacts are provided by residues Gln83, 101–105 (GEGKT), and Asp489. The interval 948–983 (ISSEEENNNEKTNININEDLERTKGEAQQTAKNPNE) is disordered. A compositionally biased stretch (polar residues) spans 973–983 (EAQQTAKNPNE).

It belongs to the SecA family. In terms of assembly, monomer and homodimer. Part of the essential Sec protein translocation apparatus which comprises SecA, SecYEG and auxiliary proteins SecDF. Other proteins may also be involved.

Its subcellular location is the cell membrane. The protein localises to the cytoplasm. It carries out the reaction ATP + H2O + cellular proteinSide 1 = ADP + phosphate + cellular proteinSide 2.. Its function is as follows. Part of the Sec protein translocase complex. Interacts with the SecYEG preprotein conducting channel. Has a central role in coupling the hydrolysis of ATP to the transfer of proteins into and across the cell membrane, serving as an ATP-driven molecular motor driving the stepwise translocation of polypeptide chains across the membrane. The protein is Protein translocase subunit SecA of Mesomycoplasma hyopneumoniae (strain 7448) (Mycoplasma hyopneumoniae).